The following is a 384-amino-acid chain: Chaperone protein DnaJ (384 aa).

The J domain occupies 5–70 (DYYEILGVTR…QKKRIYDTYG (66 aa)). Residues 134-212 (GTEKEIRLQT…CNGQGRTRQS (79 aa)) form a CR-type zinc finger. Residues Cys147, Cys150, Cys164, Cys167, Cys186, Cys189, Cys200, and Cys203 each coordinate Zn(2+). CXXCXGXG motif repeat units follow at residues 147 to 154 (CEECNGSG), 164 to 171 (CPVCQGSG), 186 to 193 (CTRCQGMG), and 200 to 207 (CKTCNGQG). The disordered stretch occupies residues 352-384 (KEKSGEKVRKWPWSKRKDREKKSMAESTREART).

The protein belongs to the DnaJ family. Homodimer. Requires Zn(2+) as cofactor.

Its subcellular location is the cytoplasm. Participates actively in the response to hyperosmotic and heat shock by preventing the aggregation of stress-denatured proteins and by disaggregating proteins, also in an autonomous, DnaK-independent fashion. Unfolded proteins bind initially to DnaJ; upon interaction with the DnaJ-bound protein, DnaK hydrolyzes its bound ATP, resulting in the formation of a stable complex. GrpE releases ADP from DnaK; ATP binding to DnaK triggers the release of the substrate protein, thus completing the reaction cycle. Several rounds of ATP-dependent interactions between DnaJ, DnaK and GrpE are required for fully efficient folding. Also involved, together with DnaK and GrpE, in the DNA replication of plasmids through activation of initiation proteins. The sequence is that of Chaperone protein DnaJ from Syntrophobacter fumaroxidans (strain DSM 10017 / MPOB).